We begin with the raw amino-acid sequence, 127 residues long: Aspartate 1-decarboxylase (127 aa).

The active-site Schiff-base intermediate with substrate; via pyruvic acid is S25. S25 is modified (pyruvic acid (Ser)). T57 lines the substrate pocket. The active-site Proton donor is the Y58. A substrate-binding site is contributed by 73–75 (GAA).

The protein belongs to the PanD family. Heterooctamer of four alpha and four beta subunits. It depends on pyruvate as a cofactor. Post-translationally, is synthesized initially as an inactive proenzyme, which is activated by self-cleavage at a specific serine bond to produce a beta-subunit with a hydroxyl group at its C-terminus and an alpha-subunit with a pyruvoyl group at its N-terminus.

It is found in the cytoplasm. It catalyses the reaction L-aspartate + H(+) = beta-alanine + CO2. The protein operates within cofactor biosynthesis; (R)-pantothenate biosynthesis; beta-alanine from L-aspartate: step 1/1. In terms of biological role, catalyzes the pyruvoyl-dependent decarboxylation of aspartate to produce beta-alanine. The chain is Aspartate 1-decarboxylase from Staphylococcus aureus (strain MSSA476).